The chain runs to 268 residues: Myb-related protein 315 (268 aa).

HTH myb-type domains follow at residues 9 to 61 and 62 to 116; these read KFGL…MNYL and RPDL…KKKL. 2 consecutive DNA-binding regions (H-T-H motif) follow at residues 37–61 and 89–112; these read WRVI…MNYL and WSKI…NTHI.

As to expression, expressed in roots, stems, leaves, seed pods and flowers. Strongest expression in the stem.

It localises to the nucleus. Transcription factor. The polypeptide is Myb-related protein 315 (Antirrhinum majus (Garden snapdragon)).